The sequence spans 444 residues: Ribulose bisphosphate carboxylase large chain (444 aa).

Lysine 5 carries the post-translational modification N6,N6,N6-trimethyllysine. Asparagine 114 and threonine 164 together coordinate substrate. The active-site Proton acceptor is lysine 166. Lysine 168 provides a ligand contact to substrate. Mg(2+) is bound by residues lysine 192, aspartate 194, and glutamate 195. Position 192 is an N6-carboxylysine (lysine 192). The Proton acceptor role is filled by histidine 285. 3 residues coordinate substrate: arginine 286, histidine 318, and serine 370.

This sequence belongs to the RuBisCO large chain family. Type I subfamily. Heterohexadecamer of 8 large chains and 8 small chains; disulfide-linked. The disulfide link is formed within the large subunit homodimers. Requires Mg(2+) as cofactor. Post-translationally, the disulfide bond which can form in the large chain dimeric partners within the hexadecamer appears to be associated with oxidative stress and protein turnover.

It localises to the plastid. The protein localises to the chloroplast. The catalysed reaction is 2 (2R)-3-phosphoglycerate + 2 H(+) = D-ribulose 1,5-bisphosphate + CO2 + H2O. It carries out the reaction D-ribulose 1,5-bisphosphate + O2 = 2-phosphoglycolate + (2R)-3-phosphoglycerate + 2 H(+). Functionally, ruBisCO catalyzes two reactions: the carboxylation of D-ribulose 1,5-bisphosphate, the primary event in carbon dioxide fixation, as well as the oxidative fragmentation of the pentose substrate in the photorespiration process. Both reactions occur simultaneously and in competition at the same active site. The protein is Ribulose bisphosphate carboxylase large chain of Ginkgo biloba (Ginkgo).